Here is a 1322-residue protein sequence, read N- to C-terminus: BRCA2-interacting transcriptional repressor EMSY (1322 aa).

The tract at residues 1–478 (MPVVWPTLLD…LPKPVTATLP (478 aa)) is interaction with BRCA2. The ENT domain maps to 16–100 (CKRILRKLEL…EWSIEGRRLV (85 aa)). The tract at residues 104-108 (PRLVP) is interaction with ZMYND11. Over residues 148–162 (STTSTPTSTPVPSGS) the composition is skewed to low complexity. Disordered stretches follow at residues 148-178 (STTS…ASNV) and 192-215 (VSCS…SSPV). Thr207 carries the post-translational modification Phosphothreonine. A phosphoserine mark is found at Ser209 and Ser213. O-linked (GlcNAc) serine glycans are attached at residues Ser228 and Ser236. The residue at position 238 (Ser238) is a Phosphoserine. O-linked (GlcNAc) threonine glycosylation is present at Thr271. Low complexity predominate over residues 417-437 (QQTQQQVAQPSPVSHQQQPQQ). A disordered region spans residues 417–444 (QQTQQQVAQPSPVSHQQQPQQSPLPPGI). Residues Thr501 and Thr506 are each glycosylated (O-linked (GlcNAc) threonine). Residue Ser557 is glycosylated (O-linked (GlcNAc) serine). The segment covering 698–707 (VAEAGNSSIQ) has biased composition (polar residues). Residues 698-736 (VAEAGNSSIQEGKEEPQNYTDSSSSSTESSQSSQDSQPV) are disordered. A compositionally biased stretch (low complexity) spans 717–734 (TDSSSSSTESSQSSQDSQ). Phosphoserine is present on residues Ser818 and Ser821. Residue Thr1120 is glycosylated (O-linked (GlcNAc) threonine). A Phosphoserine modification is found at Ser1136. Polar residues predominate over residues 1205 to 1223 (QKCRESCSSPSTVGSSLTT). Disordered regions lie at residues 1205-1231 (QKCR…PPAV) and 1290-1322 (QLDD…AERS). The segment covering 1291 to 1310 (LDDEETAMEQDIDSSTEDGT) has biased composition (acidic residues). Polar residues predominate over residues 1312-1322 (PSPSQSSAERS).

As to quaternary structure, homodimer. Interacts with the transactivation domain of BRCA2. Interacts with CBX1 (via chromoshadow domain). Interacts with ZMYND11. Does not interact with CBX3 or CBX5. Component of a nuclear receptor-mediated transcription complex composed of at least ZNF335, CCAR2 and EMSY; the complex stimulates the transcription of nuclear receptor target genes such as SOX9 and HOXA1. Within the complex interacts with CCAR2 and ZNF335. Components of this complex may associate with components of a histone methylation complex to form a complex at least composed of ZNF335, HCFC1, CCAR2, EMSY, MKI67, RBBP5, ASH2L and WDR5. Within this complex, interacts with ASH2L and RBBP5. In terms of processing, O-glycosylated during cytokinesis at sites identical or close to phosphorylation sites, this interferes with the phosphorylation status.

It localises to the nucleus. Regulator which is able to repress transcription, possibly via its interaction with a multiprotein chromatin remodeling complex that modifies the chromatin. Its interaction with BRCA2 suggests that it may play a central role in the DNA repair function of BRCA2. Mediates ligand-dependent transcriptional activation by nuclear hormone receptors. In Homo sapiens (Human), this protein is BRCA2-interacting transcriptional repressor EMSY.